The sequence spans 636 residues: Translation factor GUF1, mitochondrial (636 aa).

The tr-type G domain occupies Ser-35–Arg-218. Residues Ala-44 to Ser-51, Asp-111 to His-115, and Asn-165 to Asp-168 each bind GTP.

It belongs to the TRAFAC class translation factor GTPase superfamily. Classic translation factor GTPase family. LepA subfamily.

Its subcellular location is the mitochondrion inner membrane. It catalyses the reaction GTP + H2O = GDP + phosphate + H(+). Its function is as follows. Promotes mitochondrial protein synthesis. May act as a fidelity factor of the translation reaction, by catalyzing a one-codon backward translocation of tRNAs on improperly translocated ribosomes. Binds to mitochondrial ribosomes in a GTP-dependent manner. The chain is Translation factor GUF1, mitochondrial from Debaryomyces hansenii (strain ATCC 36239 / CBS 767 / BCRC 21394 / JCM 1990 / NBRC 0083 / IGC 2968) (Yeast).